A 481-amino-acid chain; its full sequence is WD repeat-containing protein 55 homolog (481 aa).

Positions 1 to 116 are disordered; the sequence is MHTHNHFKTP…NRDVETNFDL (116 aa). Composition is skewed to acidic residues over residues 12–23, 31–46, and 68–81; these read DAEEVDDLDDEM, IEQE…DDGF, and DSFD…DSDD. WD repeat units follow at residues 144–183, 188–227, 231–269, 272–311, 314–353, and 398–437; these read KLED…NKLI, VHSK…LKKL, AHDD…HVFE, QIDD…LYVQ, PYEE…YHCD, and QHNM…DFGD.

This sequence belongs to the WD repeat WDR55 family.

The polypeptide is WD repeat-containing protein 55 homolog (Drosophila ananassae (Fruit fly)).